Here is a 228-residue protein sequence, read N- to C-terminus: Urease accessory protein UreF (228 aa).

It belongs to the UreF family. UreD, UreF and UreG form a complex that acts as a GTP-hydrolysis-dependent molecular chaperone, activating the urease apoprotein by helping to assemble the nickel containing metallocenter of UreC. The UreE protein probably delivers the nickel.

The protein resides in the cytoplasm. Required for maturation of urease via the functional incorporation of the urease nickel metallocenter. This Lachnoclostridium phytofermentans (strain ATCC 700394 / DSM 18823 / ISDg) (Clostridium phytofermentans) protein is Urease accessory protein UreF.